A 107-amino-acid chain; its full sequence is Phosphoribosyl-ATP pyrophosphatase (107 aa).

This sequence belongs to the PRA-PH family.

The protein resides in the cytoplasm. It carries out the reaction 1-(5-phospho-beta-D-ribosyl)-ATP + H2O = 1-(5-phospho-beta-D-ribosyl)-5'-AMP + diphosphate + H(+). It functions in the pathway amino-acid biosynthesis; L-histidine biosynthesis; L-histidine from 5-phospho-alpha-D-ribose 1-diphosphate: step 2/9. The sequence is that of Phosphoribosyl-ATP pyrophosphatase from Bacillus cereus (strain ATCC 14579 / DSM 31 / CCUG 7414 / JCM 2152 / NBRC 15305 / NCIMB 9373 / NCTC 2599 / NRRL B-3711).